The following is a 354-amino-acid chain: Inositol-tetrakisphosphate 1-kinase 1 (354 aa).

Basic and acidic residues predominate over residues 1 to 16; sequence MRVHEEASEDKEREVE. The interval 1-24 is disordered; sequence MRVHEEASEDKEREVEEAPDLMPL. Lysine 53 and lysine 95 together coordinate 1D-myo-inositol 1,3,4-trisphosphate. ATP is bound by residues arginine 130 and lysine 180. An ATP-grasp domain is found at 140–347; it reads LNLSNAYGEV…FLLSLVQNKY (208 aa). Residues histidine 191 and lysine 223 each coordinate 1D-myo-inositol 1,3,4-trisphosphate. ATP is bound by residues 212-223 and serine 238; that span reads QEFVNHGGILFK. Mg(2+) contacts are provided by aspartate 303, aspartate 318, and asparagine 320. Position 320 (asparagine 320) interacts with 1D-myo-inositol 1,3,4-trisphosphate.

Belongs to the ITPK1 family. As to quaternary structure, monomer. It depends on Mg(2+) as a cofactor. Expressed in roots, leaves, flowers, anthers and embryos.

It catalyses the reaction 1D-myo-inositol 3,4,5,6-tetrakisphosphate + ATP = 1D-myo-inositol 1,3,4,5,6-pentakisphosphate + ADP + H(+). It carries out the reaction 1D-myo-inositol 1,3,4-trisphosphate + ATP = 1D-myo-inositol 1,3,4,5-tetrakisphosphate + ADP + H(+). The catalysed reaction is 1D-myo-inositol 1,3,4-trisphosphate + ATP = 1D-myo-inositol 1,3,4,6-tetrakisphosphate + ADP + H(+). Functionally, kinase that can phosphorylate various inositol polyphosphate such as Ins(3,4,5,6)P4 or Ins(1,3,4)P3 and participates in phytic acid biosynthesis in developing seeds. Phytic acid is the primary storage form of phosphorus in cereal grains and other plant seeds. The sequence is that of Inositol-tetrakisphosphate 1-kinase 1 from Oryza sativa subsp. japonica (Rice).